We begin with the raw amino-acid sequence, 475 residues long: Putative aldehyde dehydrogenase SH0913 (475 aa).

Gly201 to Gly207 lines the NAD(+) pocket. Residues Glu245 and Cys279 contribute to the active site.

The protein belongs to the aldehyde dehydrogenase family.

The enzyme catalyses an aldehyde + NAD(+) + H2O = a carboxylate + NADH + 2 H(+). This chain is Putative aldehyde dehydrogenase SH0913, found in Staphylococcus haemolyticus (strain JCSC1435).